Here is a 100-residue protein sequence, read N- to C-terminus: Bombyxin A-2 homolog (100 aa).

An N-terminal signal peptide occupies residues 1–18 (MRTQVLFLIVVLAVMASG). 3 disulfide bridges follow: cysteine 26/cysteine 85, cysteine 38/cysteine 98, and cysteine 84/cysteine 89. The propeptide at 47-75 (PPYISSENEGYGWKWLERQRARQLDEARG) is c peptide like.

It belongs to the insulin family. Heterodimer of a B chain and an A chain linked by two disulfide bonds.

Its subcellular location is the secreted. Functionally, brain peptide responsible for activation of prothoracic glands to produce ecdysone in insects. This is Bombyxin A-2 homolog (SBXA2) from Samia cynthia (Ailanthus silkmoth).